We begin with the raw amino-acid sequence, 295 residues long: Acetylglutamate kinase (295 aa).

Residues 61–62 (GG), R83, and N182 each bind substrate.

Belongs to the acetylglutamate kinase family. ArgB subfamily.

It localises to the cytoplasm. The catalysed reaction is N-acetyl-L-glutamate + ATP = N-acetyl-L-glutamyl 5-phosphate + ADP. Its pathway is amino-acid biosynthesis; L-arginine biosynthesis; N(2)-acetyl-L-ornithine from L-glutamate: step 2/4. In terms of biological role, catalyzes the ATP-dependent phosphorylation of N-acetyl-L-glutamate. The chain is Acetylglutamate kinase from Clostridium acetobutylicum (strain ATCC 824 / DSM 792 / JCM 1419 / IAM 19013 / LMG 5710 / NBRC 13948 / NRRL B-527 / VKM B-1787 / 2291 / W).